Here is a 137-residue protein sequence, read N- to C-terminus: Nucleoside diphosphate kinase (137 aa).

6 residues coordinate ATP: Lys-9, Phe-57, Arg-85, Thr-91, Arg-102, and Asn-112. His-115 functions as the Pros-phosphohistidine intermediate in the catalytic mechanism.

It belongs to the NDK family. Homotetramer. Requires Mg(2+) as cofactor.

The protein resides in the cytoplasm. The enzyme catalyses a 2'-deoxyribonucleoside 5'-diphosphate + ATP = a 2'-deoxyribonucleoside 5'-triphosphate + ADP. It catalyses the reaction a ribonucleoside 5'-diphosphate + ATP = a ribonucleoside 5'-triphosphate + ADP. Major role in the synthesis of nucleoside triphosphates other than ATP. The ATP gamma phosphate is transferred to the NDP beta phosphate via a ping-pong mechanism, using a phosphorylated active-site intermediate. The chain is Nucleoside diphosphate kinase from Wolinella succinogenes (strain ATCC 29543 / DSM 1740 / CCUG 13145 / JCM 31913 / LMG 7466 / NCTC 11488 / FDC 602W) (Vibrio succinogenes).